The primary structure comprises 209 residues: Ribosome maturation factor RimM (209 aa).

The PRC barrel domain occupies 103-178 (EGATYVSDLV…RIEMVLPQGM (76 aa)). The segment at 184–209 (PLSKAEKERQKSEADETREAGERRKR) is disordered. Residues 187 to 209 (KAEKERQKSEADETREAGERRKR) are compositionally biased toward basic and acidic residues.

It belongs to the RimM family. Binds ribosomal protein uS19.

It is found in the cytoplasm. Its function is as follows. An accessory protein needed during the final step in the assembly of 30S ribosomal subunit, possibly for assembly of the head region. Essential for efficient processing of 16S rRNA. May be needed both before and after RbfA during the maturation of 16S rRNA. It has affinity for free ribosomal 30S subunits but not for 70S ribosomes. This chain is Ribosome maturation factor RimM, found in Koribacter versatilis (strain Ellin345).